A 162-amino-acid chain; its full sequence is MKILSVFFLALFFIIFNKESLAEKTNKGTGSGVSSKKKNKKGSGEPLIDVHDLISDMIKKEEELVEVNKRKSKYKLATSVLAGLLGVVSTVLLGGVGLVLYNTEKGRHPFKIGSSDPADNANPDADSESNGEPNADPQVTAQDVTPEQPQGDDNNLVSGPEH.

The first 16 residues, 1-16 (MKILSVFFLALFFIIF), serve as a signal peptide directing secretion. Disordered stretches follow at residues 24-44 (KTNK…KGSG) and 109-162 (PFKI…GPEH). Positions 114-130 (SSDPADNANPDADSESN) are enriched in low complexity. The segment covering 137–162 (PQVTAQDVTPEQPQGDDNNLVSGPEH) has biased composition (polar residues).

The chain is Circumsporozoite protein-related antigen from Plasmodium falciparum.